Consider the following 188-residue polypeptide: UPF0461 protein C5orf24 (188 aa).

Over residues 1–10 (MMHPVASSNP) the composition is skewed to polar residues. The segment at 1-20 (MMHPVASSNPAFCGPGKPSC) is disordered. Ser37 carries the post-translational modification Phosphoserine. Residue Lys75 forms a Glycyl lysine isopeptide (Lys-Gly) (interchain with G-Cter in SUMO2) linkage. Positions 79-142 (KKKKNLNRSG…GYKVSPGRPP (64 aa)) are disordered. Over residues 80-92 (KKKNLNRSGKRGR) the composition is skewed to basic residues. Residues 94–107 (SGTTKSAGYRTSTG) are compositionally biased toward polar residues. A phosphoserine mark is found at Ser121 and Ser180. A Glycyl lysine isopeptide (Lys-Gly) (interchain with G-Cter in SUMO2) cross-link involves residue Lys184.

It belongs to the UPF0461 family.

The polypeptide is UPF0461 protein C5orf24 (C5orf24) (Homo sapiens (Human)).